The sequence spans 262 residues: Type III pantothenate kinase (262 aa).

ATP is bound at residue D9–K16. Residues Y96 and G103–R106 contribute to the substrate site. Residue D105 is the Proton acceptor of the active site. T129 serves as a coordination point for ATP. T189 contributes to the substrate binding site.

This sequence belongs to the type III pantothenate kinase family. In terms of assembly, homodimer. The cofactor is NH4(+). K(+) serves as cofactor.

It is found in the cytoplasm. The enzyme catalyses (R)-pantothenate + ATP = (R)-4'-phosphopantothenate + ADP + H(+). It participates in cofactor biosynthesis; coenzyme A biosynthesis; CoA from (R)-pantothenate: step 1/5. Catalyzes the phosphorylation of pantothenate (Pan), the first step in CoA biosynthesis. This is Type III pantothenate kinase from Burkholderia vietnamiensis (strain G4 / LMG 22486) (Burkholderia cepacia (strain R1808)).